Reading from the N-terminus, the 367-residue chain is Zinc transport system membrane protein TroD (367 aa).

Helical transmembrane passes span 5–25 (VVLIAVVVSVACALCGVFLVL), 28–48 (ISLMSDAISHSVILGIVLGYF), 56–76 (FVPFVGAVIAGICSVICAELL), 87–107 (AVGLVFPAMFGLGVILVSLYA), 140–160 (SLVQMGSVLCGLLLLLALFFK), 170–190 (VLATSLGFSPTLINYGLMLAV), 201–221 (VGAVLVIALMITPPAAALLLT), 224–244 (LLLMLVLASLLASCASISGLF), and 251–271 (GSIAGAMATMAGVLFALVYLF).

The protein belongs to the ABC-3 integral membrane protein family.

The protein localises to the cell membrane. Functionally, part of an ATP-driven transport system TroABCD for zinc. This Treponema pallidum (strain Nichols) protein is Zinc transport system membrane protein TroD (troD).